Consider the following 148-residue polypeptide: Large ribosomal subunit protein bL9 (148 aa).

This sequence belongs to the bacterial ribosomal protein bL9 family.

Functionally, binds to the 23S rRNA. The polypeptide is Large ribosomal subunit protein bL9 (Thermus thermophilus (strain ATCC BAA-163 / DSM 7039 / HB27)).